The sequence spans 238 residues: ATP synthase subunit a (238 aa).

5 consecutive transmembrane segments (helical) span residues 15–35 (IFNL…FVFI), 76–96 (YSLF…LGLM), 111–131 (PTAN…LTHI), 167–187 (LALR…LLLL), and 208–230 (AFSV…VYLG).

The protein belongs to the ATPase A chain family. In terms of assembly, F-type ATPases have 2 components, CF(1) - the catalytic core - and CF(0) - the membrane proton channel. CF(1) has five subunits: alpha(3), beta(3), gamma(1), delta(1), epsilon(1). CF(0) has three main subunits: a(1), b(2) and c(9-12). The alpha and beta chains form an alternating ring which encloses part of the gamma chain. CF(1) is attached to CF(0) by a central stalk formed by the gamma and epsilon chains, while a peripheral stalk is formed by the delta and b chains.

It is found in the cell membrane. Its function is as follows. Key component of the proton channel; it plays a direct role in the translocation of protons across the membrane. The chain is ATP synthase subunit a from Streptococcus pneumoniae serotype 19F (strain G54).